Consider the following 499-residue polypeptide: ADP,ATP carrier protein 5 (499 aa).

11 helical membrane-spanning segments follow: residues 25–45 (LGKF…QNVL), 61–81 (IAGF…VIIY), 93–113 (IFYY…FVIY), 148–168 (YIVY…LLFW), 183–203 (FYTL…FLMM), 223–243 (ITLV…CCLL), 286–306 (LWLL…VEAV), 327–347 (LYIL…NNIM), 356–376 (AVIS…LIVF), 380–400 (ILSL…VSIG), and 468–488 (LISP…IYAV).

It belongs to the ADP/ATP translocase tlc family.

The protein resides in the cell membrane. Functionally, provides the rickettsial cell with host ATP in exchange for rickettsial ADP. This is an obligate exchange system. This energy acquiring activity is an important component of rickettsial parasitism. This is ADP,ATP carrier protein 5 (tlcE) from Rickettsia conorii (strain ATCC VR-613 / Malish 7).